Here is a 267-residue protein sequence, read N- to C-terminus: NAD kinase 2 (267 aa).

The Proton acceptor role is filled by Asp52. NAD(+)-binding positions include 52–53 (DA), 124–125 (NE), Arg151, Asp153, 164–169 (TAYNKS), and Ala188.

Belongs to the NAD kinase family. Requires a divalent metal cation as cofactor.

Its subcellular location is the cytoplasm. The catalysed reaction is NAD(+) + ATP = ADP + NADP(+) + H(+). Involved in the regulation of the intracellular balance of NAD and NADP, and is a key enzyme in the biosynthesis of NADP. Catalyzes specifically the phosphorylation on 2'-hydroxyl of the adenosine moiety of NAD to yield NADP. This is NAD kinase 2 from Bacillus cereus (strain ATCC 10987 / NRS 248).